A 415-amino-acid chain; its full sequence is Probable RAD2-like endonuclease 369L (415 aa).

Positions 1 to 114 (MGIKNLTKFI…EDVKKKTLSL (114 aa)) are N-domain. Residues D34, E86, E198, E200, D219, D221, and D277 each contribute to the Mg(2+) site. Residues 163–297 (VKQRHRYDIR…VKSYELIKVQ (135 aa)) form an I-domain region.

It belongs to the XPG/RAD2 endonuclease family. The cofactor is Mg(2+).

The protein resides in the host nucleus. Probable endonuclease. In Acheta domesticus (House cricket), this protein is Probable RAD2-like endonuclease 369L.